The sequence spans 330 residues: Aspartate--ammonia ligase (330 aa).

This sequence belongs to the class-II aminoacyl-tRNA synthetase family. AsnA subfamily.

It localises to the cytoplasm. The catalysed reaction is L-aspartate + NH4(+) + ATP = L-asparagine + AMP + diphosphate + H(+). The protein operates within amino-acid biosynthesis; L-asparagine biosynthesis; L-asparagine from L-aspartate (ammonia route): step 1/1. The sequence is that of Aspartate--ammonia ligase from Streptococcus pyogenes serotype M6 (strain ATCC BAA-946 / MGAS10394).